The sequence spans 221 residues: MLTDLRLYQLISPSLPVGAFTYSQGLEWAIEKGWVKDEQSLALWLTSQMQGSLATLEIPILIQLHHLLGVQNYEKAQYWCDFIVASRETKELRIEERQRGAAFAKLLPQLGIDLSERTFPLVNQTQVAAFALAAEKWEIPLVKLCSAYMWSWLENAVMAGVKLIPLGQTAGQKLLIDLTKFVPEVIEKSMRWPCDRIGSFTPAQVIASCQHETQYTRLFRS.

This sequence belongs to the UreF family. In terms of assembly, ureD, UreF and UreG form a complex that acts as a GTP-hydrolysis-dependent molecular chaperone, activating the urease apoprotein by helping to assemble the nickel containing metallocenter of UreC. The UreE protein probably delivers the nickel.

Its subcellular location is the cytoplasm. In terms of biological role, required for maturation of urease via the functional incorporation of the urease nickel metallocenter. The protein is Urease accessory protein UreF of Vibrio parahaemolyticus.